The primary structure comprises 277 residues: Small ribosomal subunit protein uS5 (277 aa).

The interval 18 to 40 (AAGRPSWSWQRPGERARTPGRKA) is disordered. Residues 29–40 (PGERARTPGRKA) are compositionally biased toward basic and acidic residues. Residues 87–150 (LKDEVLKIMP…ILAKLSIIPV (64 aa)) enclose the S5 DRBM domain.

It belongs to the universal ribosomal protein uS5 family. Component of the small ribosomal subunit.

Its subcellular location is the cytoplasm. It is found in the nucleus. The protein localises to the nucleolus. Functionally, component of the ribosome, a large ribonucleoprotein complex responsible for the synthesis of proteins in the cell. The small ribosomal subunit (SSU) binds messenger RNAs (mRNAs) and translates the encoded message by selecting cognate aminoacyl-transfer RNA (tRNA) molecules. The large subunit (LSU) contains the ribosomal catalytic site termed the peptidyl transferase center (PTC), which catalyzes the formation of peptide bonds, thereby polymerizing the amino acids delivered by tRNAs into a polypeptide chain. The nascent polypeptides leave the ribosome through a tunnel in the LSU and interact with protein factors that function in enzymatic processing, targeting, and the membrane insertion of nascent chains at the exit of the ribosomal tunnel. Plays a role in the assembly and function of the 40S ribosomal subunit. Mutations in this protein affects the control of translational fidelity. Involved in nucleolar processing of pre-18S ribosomal RNA and ribosome assembly. The chain is Small ribosomal subunit protein uS5 (rps2) from Ictalurus punctatus (Channel catfish).